The chain runs to 869 residues: Aminopeptidase N (869 aa).

Residues Glu122 and 262 to 266 (GAMEN) contribute to the substrate site. Position 298 (His298) interacts with Zn(2+). Residue Glu299 is the Proton acceptor of the active site. Zn(2+) is bound by residues His302 and Glu321.

It belongs to the peptidase M1 family. Zn(2+) serves as cofactor.

The protein resides in the cell inner membrane. It carries out the reaction Release of an N-terminal amino acid, Xaa-|-Yaa- from a peptide, amide or arylamide. Xaa is preferably Ala, but may be most amino acids including Pro (slow action). When a terminal hydrophobic residue is followed by a prolyl residue, the two may be released as an intact Xaa-Pro dipeptide.. Aminopeptidase N is involved in the degradation of intracellular peptides generated by protein breakdown during normal growth as well as in response to nutrient starvation. This Haemophilus influenzae (strain ATCC 51907 / DSM 11121 / KW20 / Rd) protein is Aminopeptidase N (pepN).